The following is a 287-amino-acid chain: Polyamine aminopropyltransferase (287 aa).

Residues 5–238 (EIWYETLHAN…GIMTFAWASN (234 aa)) form the PABS domain. Q33 provides a ligand contact to S-methyl-5'-thioadenosine. Spermidine contacts are provided by H64 and D88. S-methyl-5'-thioadenosine is bound by residues E108 and 140-141 (DG). D158 functions as the Proton acceptor in the catalytic mechanism. Spermidine is bound at residue 158–161 (DCTD). P165 serves as a coordination point for S-methyl-5'-thioadenosine.

Belongs to the spermidine/spermine synthase family. In terms of assembly, homodimer or homotetramer.

The protein localises to the cytoplasm. It catalyses the reaction S-adenosyl 3-(methylsulfanyl)propylamine + putrescine = S-methyl-5'-thioadenosine + spermidine + H(+). The protein operates within amine and polyamine biosynthesis; spermidine biosynthesis; spermidine from putrescine: step 1/1. In terms of biological role, catalyzes the irreversible transfer of a propylamine group from the amino donor S-adenosylmethioninamine (decarboxy-AdoMet) to putrescine (1,4-diaminobutane) to yield spermidine. This Pectobacterium carotovorum subsp. carotovorum (strain PC1) protein is Polyamine aminopropyltransferase.